Reading from the N-terminus, the 331-residue chain is N-arachidonyl glycine receptor (331 aa).

The Extracellular portion of the chain corresponds to methionine 1–leucine 26. A glycan (N-linked (GlcNAc...) asparagine) is linked at asparagine 14. A helical membrane pass occupies residues valine 27–phenylalanine 47. Residues serine 48–threonine 56 lie on the Cytoplasmic side of the membrane. Residues valine 57 to phenylalanine 77 traverse the membrane as a helical segment. Residues arginine 78 to histidine 95 lie on the Extracellular side of the membrane. A disulfide bridge links cysteine 94 with cysteine 172. A helical membrane pass occupies residues isoleucine 96–serine 116. The Cytoplasmic portion of the chain corresponds to alanine 117–alanine 138. Residues valine 139–leucine 159 traverse the membrane as a helical segment. Over aspartate 160 to arginine 191 the chain is Extracellular. N-linked (GlcNAc...) asparagine glycosylation is present at asparagine 188. A helical membrane pass occupies residues leucine 192–histidine 212. Over serine 213 to threonine 236 the chain is Cytoplasmic. Residues leucine 237–leucine 257 traverse the membrane as a helical segment. Topologically, residues glutamine 258–glycine 268 are extracellular. Residues alanine 269–valine 289 traverse the membrane as a helical segment. Over serine 290–leucine 331 the chain is Cytoplasmic. Phosphoserine is present on serine 322.

This sequence belongs to the G-protein coupled receptor 1 family. In terms of tissue distribution, expressed in testis, spleen and brain (at protein level).

The protein localises to the cell membrane. Its subcellular location is the cytoplasmic vesicle membrane. Its function is as follows. G protein-coupled receptor (GPCR) that plays a role in diverse physiological processes particularly within the immune and nervous systems. Becomes active when triggered by various endogenous ligands including endocannabinoid N-arachidonyl glycine (NAGly), delta-9-tetrahydrocannabinol or resolvin D2/RvD2 derived from the omega-3 fatty acid docosahexaenoic acid (DHA). Upon RvD2 binding, facilitates the resolution of inflammation, aiding in tissue repair and homeostasis. Mechanistically, RvD2 ligation initiates Galphas protein coupling, activation of cAMP-PKA signaling pathway and phosphorylation of STAT3, leading to RvD2-stimulated macrophage phagocytosis. Mediates NAGly-induced process of reorganization of actin filaments and induction of acrosomal exocytosis. Activation by N-arachidonoyl glycine (NAGly) can also induce apoptosis in macrophages. Plays a role in homeostasis of CD8+ subsets of intraepithelial lymphocytes (IELs) (CD8alphaalpha and CD8alphabeta IELs) in small intestine by supporting preferential migration of CD8alphaalpha T-cells to intraepithelial compartment over lamina propria compartment, and by mediating their reconstitution into small intestine after bone marrow transplant. Participates also in hypotensive responses, mediating reduction in intraocular and blood pressure. This Rattus norvegicus (Rat) protein is N-arachidonyl glycine receptor.